The following is a 107-amino-acid chain: UPF0060 membrane protein RPB_2370 (107 aa).

The next 4 membrane-spanning stretches (helical) occupy residues 5-25, 31-51, 61-81, and 85-105; these read IIYV…WGWL, VWWL…LTLV, AAYG…VEGV, and RWDV…LWGP.

The protein belongs to the UPF0060 family.

Its subcellular location is the cell inner membrane. This is UPF0060 membrane protein RPB_2370 from Rhodopseudomonas palustris (strain HaA2).